Consider the following 430-residue polypeptide: Serine--tRNA ligase (430 aa).

237–239 serves as a coordination point for L-serine; it reads TAE. 268–270 serves as a coordination point for ATP; the sequence is RSE. Residue Glu-291 participates in L-serine binding. 355–358 contributes to the ATP binding site; it reads EISS. Position 391 (Ser-391) interacts with L-serine.

The protein belongs to the class-II aminoacyl-tRNA synthetase family. Type-1 seryl-tRNA synthetase subfamily. In terms of assembly, homodimer. The tRNA molecule binds across the dimer.

It localises to the cytoplasm. The catalysed reaction is tRNA(Ser) + L-serine + ATP = L-seryl-tRNA(Ser) + AMP + diphosphate + H(+). It catalyses the reaction tRNA(Sec) + L-serine + ATP = L-seryl-tRNA(Sec) + AMP + diphosphate + H(+). It participates in aminoacyl-tRNA biosynthesis; selenocysteinyl-tRNA(Sec) biosynthesis; L-seryl-tRNA(Sec) from L-serine and tRNA(Sec): step 1/1. Its function is as follows. Catalyzes the attachment of serine to tRNA(Ser). Is also able to aminoacylate tRNA(Sec) with serine, to form the misacylated tRNA L-seryl-tRNA(Sec), which will be further converted into selenocysteinyl-tRNA(Sec). The polypeptide is Serine--tRNA ligase (Shigella dysenteriae serotype 1 (strain Sd197)).